The sequence spans 82 residues: uncharacterized protein (82 aa).

This is an uncharacterized protein from Rickettsia prowazekii (strain Madrid E).